A 930-amino-acid chain; its full sequence is Beta-mannosidase A (930 aa).

Positions 1-21 (MHVKAETVLALLTPGLPSVVG) are cleaved as a signal peptide. N-linked (GlcNAc...) asparagine glycosylation is found at asparagine 62, asparagine 246, asparagine 281, asparagine 315, and asparagine 346. Residue glutamate 478 is the Proton donor of the active site. Residues asparagine 536, asparagine 607, asparagine 630, asparagine 657, asparagine 737, asparagine 760, asparagine 782, asparagine 789, asparagine 797, asparagine 823, and asparagine 909 are each glycosylated (N-linked (GlcNAc...) asparagine).

This sequence belongs to the glycosyl hydrolase 2 family. Beta-mannosidase A subfamily. As to quaternary structure, homodimer.

It is found in the secreted. It carries out the reaction Hydrolysis of terminal, non-reducing beta-D-mannose residues in beta-D-mannosides.. It functions in the pathway glycan metabolism; N-glycan degradation. Functionally, exoglycosidase that cleaves the single beta-linked mannose residue from the non-reducing end of beta-mannosidic oligosaccharides of various complexity and length. Involved in the degradation of polymeric mannan and galactomannan. The protein is Beta-mannosidase A (mndA) of Neosartorya fischeri (strain ATCC 1020 / DSM 3700 / CBS 544.65 / FGSC A1164 / JCM 1740 / NRRL 181 / WB 181) (Aspergillus fischerianus).